The following is a 281-amino-acid chain: Tetraspanin-5 (281 aa).

The Cytoplasmic segment spans residues 1 to 7 (MNRMSNT). The chain crosses the membrane as a helical span at residues 8–28 (VIGFLNILTLISSIVLLGSAL). Residues 29 to 44 (WMGRSKTTCEHFLQKP) are Extracellular-facing. The chain crosses the membrane as a helical span at residues 45 to 65 (LLILGLAILILSVAGLVGACC). At 66–74 (DVAWVLWVY) the chain is on the cytoplasmic side. A helical membrane pass occupies residues 75–95 (LFFMVFIIVALMGLTLFGFIV). Topologically, residues 96–221 (TSHSGGVVVD…TVRRDWHKLS (126 aa)) are extracellular. Residues 222 to 242 (LVNVIVVIFLIAVYCVGCCAF) form a helical membrane-spanning segment. The Cytoplasmic portion of the chain corresponds to 243–281 (KNAKRPQHYGFPYGRYGMSKSRPGWEQSWSRWWHGRDRY).

It belongs to the tetraspanin (TM4SF) family.

The protein localises to the membrane. In terms of biological role, may be involved in the regulation of cell differentiation. The chain is Tetraspanin-5 (TET5) from Arabidopsis thaliana (Mouse-ear cress).